The following is a 169-amino-acid chain: Cell division inhibitor SulA (169 aa).

The tract at residues 1 to 22 (MHTSIYANRSTSFSPSAGNDTQ) is disordered. Residues 106–112 (ALRTGNY) are ftsZ binding. The segment at 162 to 169 (KIHSNLYH) is lon protease binding.

The protein belongs to the SulA family. In terms of assembly, interacts with FtsZ. In terms of processing, is rapidly cleaved and degraded by the Lon protease once DNA damage is repaired.

In terms of biological role, component of the SOS system and an inhibitor of cell division. Accumulation of SulA causes rapid cessation of cell division and the appearance of long, non-septate filaments. In the presence of GTP, binds a polymerization-competent form of FtsZ in a 1:1 ratio, thus inhibiting FtsZ polymerization and therefore preventing it from participating in the assembly of the Z ring. This mechanism prevents the premature segregation of damaged DNA to daughter cells during cell division. This is Cell division inhibitor SulA from Enterobacter sp. (strain 638).